The sequence spans 302 residues: (2S)-3-sulfopropanediol sulfolyase activating enzyme (302 aa).

One can recognise a Radical SAM core domain in the interval 19-301; sequence HDGEGIRTLV…RLNIMLKSYE (283 aa). The [4Fe-4S] cluster site is built by C33, C37, C40, C59, C65, C68, C72, C91, C94, C97, and C101. An S-adenosyl-L-methionine-binding site is contributed by 39–41; it reads WCS. 2 4Fe-4S ferredoxin-type domains span residues 50 to 81 and 82 to 111; these read PERA…SIVG and GLVC…VYGE. S-adenosyl-L-methionine is bound by residues G141 and 190 to 192; that span reads DIK.

The protein belongs to the organic radical-activating enzymes family. The cofactor is [4Fe-4S] cluster.

It carries out the reaction glycyl-[protein] + reduced [flavodoxin] + S-adenosyl-L-methionine = glycin-2-yl radical-[protein] + semiquinone [flavodoxin] + 5'-deoxyadenosine + L-methionine + H(+). The protein operates within organosulfur degradation; alkanesulfonate degradation. Involved in the degradation of the organosulfur compound 2(S)-dihydroxypropanesulfonate (DHPS). Catalyzes activation of the (2S)-3-sulfopropanediol sulfolyase HpsG under anaerobic conditions by generation of an organic free radical on a glycine residue. This chain is (2S)-3-sulfopropanediol sulfolyase activating enzyme, found in Bilophila wadsworthia (strain 3_1_6).